The sequence spans 179 residues: Replication restart protein DnaT (179 aa).

Residues 154 to 179 (SNGGLPKRDVNTVSEPDSQIPPGFRG) are disordered.

This sequence belongs to the DnaT family. In terms of assembly, homooligomerizes. Interacts with PriB. Component of the replication restart primosome. Primosome assembly occurs via a 'hand-off' mechanism. PriA binds to replication forks, subsequently PriB then DnaT bind; DnaT then displaces ssDNA to generate the helicase loading substrate.

In terms of biological role, involved in the restart of stalled replication forks, which reloads the replicative helicase on sites other than the origin of replication. Can function in multiple replication restart pathways. Displaces ssDNA from a PriB-ssDNA complex. Probably forms a spiral filament on ssDNA. In Escherichia coli O127:H6 (strain E2348/69 / EPEC), this protein is Replication restart protein DnaT.